Here is a 93-residue protein sequence, read N- to C-terminus: Large ribosomal subunit protein uL23cz/uL23cy (93 aa).

The protein belongs to the universal ribosomal protein uL23 family. In terms of assembly, part of the 50S ribosomal subunit.

Its subcellular location is the plastid. It localises to the chloroplast. In terms of biological role, binds to 23S rRNA. This Lactuca sativa (Garden lettuce) protein is Large ribosomal subunit protein uL23cz/uL23cy (rpl23-A).